Reading from the N-terminus, the 559-residue chain is Poly(3-hydroxyalkanoate) polymerase 1 (559 aa).

The active site involves Cys-296.

The protein belongs to the PHA/PHB synthase family. Type II PhaC subfamily.

Its pathway is biopolymer metabolism; poly-(R)-3-hydroxybutanoate biosynthesis. In terms of biological role, synthesizes poly(3-hydroxyalkanoates) (PHA), complements a mutant of P.putida that does not make PHA. This is Poly(3-hydroxyalkanoate) polymerase 1 from Ectopseudomonas oleovorans (Pseudomonas oleovorans).